The following is a 101-amino-acid chain: Iron-sulfur cluster assembly protein CyaY (101 aa).

The protein belongs to the frataxin family.

Its function is as follows. Involved in iron-sulfur (Fe-S) cluster assembly. May act as a regulator of Fe-S biogenesis. The sequence is that of Iron-sulfur cluster assembly protein CyaY from Actinobacillus pleuropneumoniae serotype 7 (strain AP76).